Here is a 299-residue protein sequence, read N- to C-terminus: uncharacterized protein (299 aa).

This is an uncharacterized protein from Mycobacterium tuberculosis (strain ATCC 25618 / H37Rv).